Reading from the N-terminus, the 282-residue chain is 2-dehydro-3-deoxyphosphooctonate aldolase (282 aa).

This sequence belongs to the KdsA family.

It is found in the cytoplasm. The enzyme catalyses D-arabinose 5-phosphate + phosphoenolpyruvate + H2O = 3-deoxy-alpha-D-manno-2-octulosonate-8-phosphate + phosphate. The protein operates within carbohydrate biosynthesis; 3-deoxy-D-manno-octulosonate biosynthesis; 3-deoxy-D-manno-octulosonate from D-ribulose 5-phosphate: step 2/3. It participates in bacterial outer membrane biogenesis; lipopolysaccharide biosynthesis. The sequence is that of 2-dehydro-3-deoxyphosphooctonate aldolase from Bordetella avium (strain 197N).